A 355-amino-acid chain; its full sequence is 3-dehydroquinate synthase (355 aa).

NAD(+) is bound by residues 71-76 (EGEASK), 105-109 (GVVGD), 129-130 (TS), Lys142, and Lys151. Zn(2+)-binding residues include Glu184, His246, and His263.

The protein belongs to the sugar phosphate cyclases superfamily. Dehydroquinate synthase family. Co(2+) serves as cofactor. Zn(2+) is required as a cofactor. Requires NAD(+) as cofactor.

It is found in the cytoplasm. It carries out the reaction 7-phospho-2-dehydro-3-deoxy-D-arabino-heptonate = 3-dehydroquinate + phosphate. It participates in metabolic intermediate biosynthesis; chorismate biosynthesis; chorismate from D-erythrose 4-phosphate and phosphoenolpyruvate: step 2/7. In terms of biological role, catalyzes the conversion of 3-deoxy-D-arabino-heptulosonate 7-phosphate (DAHP) to dehydroquinate (DHQ). This chain is 3-dehydroquinate synthase, found in Streptococcus sanguinis (strain SK36).